Consider the following 210-residue polypeptide: THAP domain-containing protein 1 (210 aa).

A THAP-type zinc finger spans residues 5-57 (CSAYGCKNRYDKDKPVSFHKFPLTRPSLCKQWEAAVKRKNFKPTKYSSICSEH). Positions 131 to 134 (DHNY) match the HCFC1-binding motif (HBM) motif. Residues 137–187 (EDTMHQRKRILQLEQQVEKLRKKLKTAQQRCRRQERQLEKLKEVVHFQREK) adopt a coiled-coil conformation.

It belongs to the THAP1 family. As to quaternary structure, interacts with PAWR. Component of a THAP1/THAP3-HCFC1-OGT complex that contains, either THAP1 or THAP3, HCFC1 and OGT. Interacts with OGT. Interacts (via the HBM) with HCFC1 (via the Kelch-repeat domain); the interaction recruits HCFC1 to the RRM1 promoter. As to expression, highest levels in heart, liver and kidney. Lower levels in brain and lung.

It is found in the nucleus. The protein localises to the nucleoplasm. The protein resides in the PML body. Functionally, DNA-binding transcription regulator that regulates endothelial cell proliferation and G1/S cell-cycle progression. Specifically binds the 5'-[AT]NTNN[GT]GGCA[AGT]-3' core DNA sequence and acts by modulating expression of pRB-E2F cell-cycle target genes, including RRM1. Component of a THAP1/THAP3-HCFC1-OGT complex that is required for the regulation of the transcriptional activity of RRM1. May also have pro-apoptotic activity by potentiating both serum-withdrawal and TNF-induced apoptosis. The protein is THAP domain-containing protein 1 (Thap1) of Mus musculus (Mouse).